We begin with the raw amino-acid sequence, 401 residues long: Nicotinate phosphoribosyltransferase (401 aa).

The residue at position 224 (His-224) is a Phosphohistidine; by autocatalysis.

Belongs to the NAPRTase family. In terms of processing, transiently phosphorylated on a His residue during the reaction cycle. Phosphorylation strongly increases the affinity for substrates and increases the rate of nicotinate D-ribonucleotide production. Dephosphorylation regenerates the low-affinity form of the enzyme, leading to product release.

It carries out the reaction nicotinate + 5-phospho-alpha-D-ribose 1-diphosphate + ATP + H2O = nicotinate beta-D-ribonucleotide + ADP + phosphate + diphosphate. The protein operates within cofactor biosynthesis; NAD(+) biosynthesis; nicotinate D-ribonucleotide from nicotinate: step 1/1. Functionally, catalyzes the synthesis of beta-nicotinate D-ribonucleotide from nicotinate and 5-phospho-D-ribose 1-phosphate at the expense of ATP. In Pseudomonas putida (strain GB-1), this protein is Nicotinate phosphoribosyltransferase.